A 93-amino-acid polypeptide reads, in one-letter code: Pyrimidine/purine nucleoside phosphorylase (93 aa).

The protein belongs to the nucleoside phosphorylase PpnP family.

The catalysed reaction is a purine D-ribonucleoside + phosphate = a purine nucleobase + alpha-D-ribose 1-phosphate. The enzyme catalyses adenosine + phosphate = alpha-D-ribose 1-phosphate + adenine. It catalyses the reaction cytidine + phosphate = cytosine + alpha-D-ribose 1-phosphate. It carries out the reaction guanosine + phosphate = alpha-D-ribose 1-phosphate + guanine. The catalysed reaction is inosine + phosphate = alpha-D-ribose 1-phosphate + hypoxanthine. The enzyme catalyses thymidine + phosphate = 2-deoxy-alpha-D-ribose 1-phosphate + thymine. It catalyses the reaction uridine + phosphate = alpha-D-ribose 1-phosphate + uracil. It carries out the reaction xanthosine + phosphate = alpha-D-ribose 1-phosphate + xanthine. In terms of biological role, catalyzes the phosphorolysis of diverse nucleosides, yielding D-ribose 1-phosphate and the respective free bases. Can use uridine, adenosine, guanosine, cytidine, thymidine, inosine and xanthosine as substrates. Also catalyzes the reverse reactions. The polypeptide is Pyrimidine/purine nucleoside phosphorylase (Shewanella halifaxensis (strain HAW-EB4)).